The following is a 433-amino-acid chain: MLTRSVLRKAPRAFSPFLQKRNLALHEYISHDILRKFGVDVPRGAPARSGEEAEKVARDLKVTDLVVKAQVLAGGRGKGQFDSGLRGGVRPVYDATEARMFAEQMIGHKLITRQTGPAGKICNVVYVCERKFIRKEYYFAILMDRENQCPMIVASDQGGVDIETVAAENPSAIIKRSLPNSPNLDPHIAEELVDKLGFSSSSKPKAVDAIVKLYKVFNDCDATQVEINPLAETTDHKVLCMDAKLNFDDNAEFRHSNIFVLRDISQEDPDEARAAKVGLNFIKLDGNIGCLVNGAGLAMATMDIIKLHGGEPANFLDVGGNANAEAIREAFSLITNDPKTTAIFVNIFGGIVRCDVIAKGLISVVSALNLNIPIICRLQGTNQGAAKEVINNSGLRIFSFDDLDEAAKKACRFSRVVEMAREADVNVSFELPL.

The transit peptide at 1 to 23 (MLTRSVLRKAPRAFSPFLQKRNL) directs the protein to the mitochondrion. One can recognise an ATP-grasp domain in the interval 31–273 (HDILRKFGVD…ISQEDPDEAR (243 aa)). ATP is bound by residues lysine 68, 75-77 (GRG), and glutamate 136. Residues asparagine 228 and aspartate 242 each coordinate Mg(2+). Substrate contacts are provided by residues asparagine 293 and 350–352 (GIV).

This sequence belongs to the succinate/malate CoA ligase beta subunit family. In terms of assembly, heterodimer of an alpha and a beta subunit. Requires Mg(2+) as cofactor.

Its subcellular location is the mitochondrion. It carries out the reaction succinate + ATP + CoA = succinyl-CoA + ADP + phosphate. Its pathway is carbohydrate metabolism; tricarboxylic acid cycle; succinate from succinyl-CoA (ligase route): step 1/1. Its function is as follows. Succinyl-CoA synthetase functions in the citric acid cycle (TCA), coupling the hydrolysis of succinyl-CoA to the synthesis of ATP and thus represents the only step of substrate-level phosphorylation in the TCA. The beta subunit provides nucleotide specificity of the enzyme and binds the substrate succinate, while the binding sites for coenzyme A and phosphate are found in the alpha subunit. The polypeptide is Succinate--CoA ligase [ADP-forming] subunit beta, mitochondrial (Schizosaccharomyces pombe (strain 972 / ATCC 24843) (Fission yeast)).